The primary structure comprises 274 residues: 2,3,4,5-tetrahydropyridine-2,6-dicarboxylate N-succinyltransferase (274 aa).

Substrate contacts are provided by Arg104 and Asp141.

The protein belongs to the transferase hexapeptide repeat family. As to quaternary structure, homotrimer.

The protein localises to the cytoplasm. The catalysed reaction is (S)-2,3,4,5-tetrahydrodipicolinate + succinyl-CoA + H2O = (S)-2-succinylamino-6-oxoheptanedioate + CoA. The protein operates within amino-acid biosynthesis; L-lysine biosynthesis via DAP pathway; LL-2,6-diaminopimelate from (S)-tetrahydrodipicolinate (succinylase route): step 1/3. The chain is 2,3,4,5-tetrahydropyridine-2,6-dicarboxylate N-succinyltransferase from Shewanella pealeana (strain ATCC 700345 / ANG-SQ1).